A 201-amino-acid polypeptide reads, in one-letter code: Translation initiation factor IF-3 (201 aa).

Residues 170–201 (TPKSASKKGHTPPKTQVEASKQANESAETEEE) form a disordered region. Residues 182-195 (PKTQVEASKQANES) show a composition bias toward polar residues.

This sequence belongs to the IF-3 family. As to quaternary structure, monomer.

It is found in the cytoplasm. IF-3 binds to the 30S ribosomal subunit and shifts the equilibrium between 70S ribosomes and their 50S and 30S subunits in favor of the free subunits, thus enhancing the availability of 30S subunits on which protein synthesis initiation begins. The sequence is that of Translation initiation factor IF-3 from Porphyromonas gingivalis (strain ATCC BAA-308 / W83).